Consider the following 266-residue polypeptide: Thymidylate synthase (266 aa).

Arg24 contacts dUMP. His54 provides a ligand contact to (6R)-5,10-methylene-5,6,7,8-tetrahydrofolate. Position 129–130 (129–130) interacts with dUMP; sequence RR. Catalysis depends on Cys149, which acts as the Nucleophile. Residues 169-172, Asn180, and 210-212 each bind dUMP; these read RSAD and HIY. Residue Asp172 participates in (6R)-5,10-methylene-5,6,7,8-tetrahydrofolate binding. A (6R)-5,10-methylene-5,6,7,8-tetrahydrofolate-binding site is contributed by Ala265.

The protein belongs to the thymidylate synthase family. Bacterial-type ThyA subfamily. As to quaternary structure, homodimer.

Its subcellular location is the cytoplasm. The enzyme catalyses dUMP + (6R)-5,10-methylene-5,6,7,8-tetrahydrofolate = 7,8-dihydrofolate + dTMP. Its pathway is pyrimidine metabolism; dTTP biosynthesis. In terms of biological role, catalyzes the reductive methylation of 2'-deoxyuridine-5'-monophosphate (dUMP) to 2'-deoxythymidine-5'-monophosphate (dTMP) while utilizing 5,10-methylenetetrahydrofolate (mTHF) as the methyl donor and reductant in the reaction, yielding dihydrofolate (DHF) as a by-product. This enzymatic reaction provides an intracellular de novo source of dTMP, an essential precursor for DNA biosynthesis. This is Thymidylate synthase from Mycobacterium leprae (strain TN).